A 96-amino-acid chain; its full sequence is Large ribosomal subunit protein uL23cz (96 aa).

Belongs to the universal ribosomal protein uL23 family. Part of the 50S ribosomal subunit.

Its subcellular location is the plastid. The protein resides in the chloroplast. In terms of biological role, binds to 23S rRNA. This is Large ribosomal subunit protein uL23cz (rpl23-A) from Sorghum bicolor (Sorghum).